We begin with the raw amino-acid sequence, 843 residues long: Beta-mannosidase B (843 aa).

Glu432 acts as the Proton donor in catalysis.

Belongs to the glycosyl hydrolase 2 family. Beta-mannosidase B subfamily.

It carries out the reaction Hydrolysis of terminal, non-reducing beta-D-mannose residues in beta-D-mannosides.. Its pathway is glycan metabolism; N-glycan degradation. In terms of biological role, exoglycosidase that cleaves the single beta-linked mannose residue from the non-reducing end of beta-mannosidic oligosaccharides of various complexity and length. Prefers mannobiose over mannotriose and has no activity against polymeric mannan. Is also severely restricted by galactosyl substitutions at the +1 subsite. Releases the terminal mannose residue from mannobiose, mannotriose and galactosyl-mannotriose (GM3), but not from galactosyl-mannobiose (GM2) or di-galactosyl-mannopentaose (G2M5). The sequence is that of Beta-mannosidase B (mndB) from Emericella nidulans (strain FGSC A4 / ATCC 38163 / CBS 112.46 / NRRL 194 / M139) (Aspergillus nidulans).